Reading from the N-terminus, the 447-residue chain is Hemogen (447 aa).

Positions 1-91 (MDLGKDQSLS…EMKVELPSQL (91 aa)) are disordered. A necessary for nuclear localization region spans residues 7–86 (QSLSKLHQTP…RQQNTEMKVE (80 aa)). Composition is skewed to basic and acidic residues over residues 14 to 25 (QTPDHHQEESHV) and 35 to 49 (RNRE…EAQE). The span at 59–78 (EKKHKRQRTGKRSERGRKRQ) shows a compositional bias: basic residues. Residues serine 89 and serine 122 each carry the phosphoserine modification. Positions 137-156 (QESVTLQENSSEYQATAVQN) are disordered. The residue at position 200 (serine 200) is a Phosphoserine. 2 disordered regions span residues 210–280 (AKVL…MAVP) and 306–337 (AMSK…PGSE). At threonine 217 the chain carries Phosphothreonine. The span at 306 to 316 (AMSKDPSHKTT) shows a compositional bias: basic and acidic residues.

It is found in the nucleus. Its function is as follows. Regulates the proliferation and differentiation of hematopoietic cells. Overexpression block the TPA-induced megakaryocytic differentiation in the K562 cell model. May also prevent cell apoptosis through the activation of the nuclear factor-kappa B (NF-kB). The chain is Hemogen (HEMGN) from Bos taurus (Bovine).